Here is a 224-residue protein sequence, read N- to C-terminus: Protein-L-isoaspartate O-methyltransferase (224 aa).

The active site involves S63.

The protein belongs to the methyltransferase superfamily. L-isoaspartyl/D-aspartyl protein methyltransferase family.

The protein resides in the cytoplasm. The catalysed reaction is [protein]-L-isoaspartate + S-adenosyl-L-methionine = [protein]-L-isoaspartate alpha-methyl ester + S-adenosyl-L-homocysteine. Functionally, catalyzes the methyl esterification of L-isoaspartyl residues in peptides and proteins that result from spontaneous decomposition of normal L-aspartyl and L-asparaginyl residues. It plays a role in the repair and/or degradation of damaged proteins. The sequence is that of Protein-L-isoaspartate O-methyltransferase from Herpetosiphon aurantiacus (strain ATCC 23779 / DSM 785 / 114-95).